A 711-amino-acid polypeptide reads, in one-letter code: Polyribonucleotide nucleotidyltransferase (711 aa).

D490 and D496 together coordinate Mg(2+). In terms of domain architecture, KH spans 556-615 (PRIETMQIPTDKIREVIGSGGKVIREIVEVSGAKVDINDEGIIKIASPNGEAIKKAYDMI). An S1 motif domain is found at 625-693 (GMVYTGTVVK…DRGKVRLSMK (69 aa)).

This sequence belongs to the polyribonucleotide nucleotidyltransferase family. Mg(2+) serves as cofactor.

Its subcellular location is the cytoplasm. It carries out the reaction RNA(n+1) + phosphate = RNA(n) + a ribonucleoside 5'-diphosphate. In terms of biological role, involved in mRNA degradation. Catalyzes the phosphorolysis of single-stranded polyribonucleotides processively in the 3'- to 5'-direction. The protein is Polyribonucleotide nucleotidyltransferase of Roseobacter denitrificans (strain ATCC 33942 / OCh 114) (Erythrobacter sp. (strain OCh 114)).